Consider the following 231-residue polypeptide: Chalcone--flavanone isomerase (231 aa).

Residues T46, N112, and S189 each coordinate substrate.

This sequence belongs to the chalcone isomerase family.

It carries out the reaction a chalcone = a flavanone.. Its pathway is secondary metabolite biosynthesis; flavonoid biosynthesis. Its function is as follows. Catalyzes the intramolecular cyclization of bicyclic chalcones into tricyclic (S)-flavanones. Responsible for the isomerization of 4,2',4',6'-tetrahydroxychalcone (also termed chalcone) into naringenin. The chain is Chalcone--flavanone isomerase (CHI) from Hordeum vulgare (Barley).